We begin with the raw amino-acid sequence, 411 residues long: Zinc metalloproteinase/disintegrin (411 aa).

The N-terminal stretch at 1-20 (MIEVLLVTICLAVFPYQGSS) is a signal peptide. The propeptide occupies 21-190 (IILESGNVND…KASQLYLTPE (170 aa)). The region spanning 197–395 (RYVKLAIVVD…SKPQCILNAP (199 aa)) is the Peptidase M12B domain. Asp-284 contacts Ca(2+). Intrachain disulfides connect Cys-308–Cys-390, Cys-352–Cys-374, and Cys-354–Cys-357. His-333 is a Zn(2+) binding site. Glu-334 is a catalytic residue. Positions 337 and 343 each coordinate Zn(2+). Ca(2+)-binding residues include Cys-390 and Asn-393. Residues 396–411 (LRTDTVSTPVSGNEPL) constitute a propeptide that is removed on maturation.

It belongs to the venom metalloproteinase (M12B) family. P-II subfamily. In terms of assembly, monomer. Zn(2+) is required as a cofactor. Expressed by the venom gland.

It localises to the secreted. Functionally, snake venom metalloproteinase that impairs hemostasis in the envenomed animal. In Protobothrops mucrosquamatus (Taiwan habu), this protein is Zinc metalloproteinase/disintegrin.